The following is a 715-amino-acid chain: Fatty acid oxidation complex subunit alpha (715 aa).

The interval 1 to 190 is enoyl-CoA hydratase; the sequence is MTTTSAFMLN…KAGLVDDVVP (190 aa). The tract at residues 306-715 is 3-hydroxyacyl-CoA dehydrogenase; that stretch reads GPLNSVGILG…WTNGETDQGN (410 aa).

This sequence in the N-terminal section; belongs to the enoyl-CoA hydratase/isomerase family. In the central section; belongs to the 3-hydroxyacyl-CoA dehydrogenase family. As to quaternary structure, heterotetramer of two alpha chains (FadJ) and two beta chains (FadI).

The protein localises to the cytoplasm. The enzyme catalyses a (3S)-3-hydroxyacyl-CoA = a (2E)-enoyl-CoA + H2O. It carries out the reaction a 4-saturated-(3S)-3-hydroxyacyl-CoA = a (3E)-enoyl-CoA + H2O. It catalyses the reaction a (3S)-3-hydroxyacyl-CoA + NAD(+) = a 3-oxoacyl-CoA + NADH + H(+). The catalysed reaction is (3S)-3-hydroxybutanoyl-CoA = (3R)-3-hydroxybutanoyl-CoA. Its pathway is lipid metabolism; fatty acid beta-oxidation. In terms of biological role, catalyzes the formation of a hydroxyacyl-CoA by addition of water on enoyl-CoA. Also exhibits 3-hydroxyacyl-CoA epimerase and 3-hydroxyacyl-CoA dehydrogenase activities. The polypeptide is Fatty acid oxidation complex subunit alpha (Salmonella newport (strain SL254)).